We begin with the raw amino-acid sequence, 149 residues long: Large ribosomal subunit protein eL19 (149 aa).

Residues 67–90 (KRKLQKRKGRRRGHGSRKGAKGAR) are disordered.

This sequence belongs to the eukaryotic ribosomal protein eL19 family. As to quaternary structure, part of the 50S ribosomal subunit.

Its function is as follows. Binds to the 23S rRNA. The chain is Large ribosomal subunit protein eL19 from Archaeoglobus fulgidus (strain ATCC 49558 / DSM 4304 / JCM 9628 / NBRC 100126 / VC-16).